We begin with the raw amino-acid sequence, 291 residues long: RPE-retinal G protein-coupled receptor (291 aa).

Residues 1-15 (MAESGTLPTGFGELE) lie on the Extracellular side of the membrane. The helical transmembrane segment at 16–36 (VLAVGTVLLVEALSGLSLNIL) threads the bilayer. Residues 37–52 (TILSFCKTPELRTPSH) lie on the Cytoplasmic side of the membrane. Residues 53-73 (LLVLSLALADSGISLNALVAA) traverse the membrane as a helical segment. Over 74–91 (TSSLLRRWPYGSEGCQAH) the chain is Extracellular. Cys88 and Cys162 form a disulfide bridge. Residues 92-112 (GFQGFVTALASICSSAAVAWG) traverse the membrane as a helical segment. Topologically, residues 113–130 (RYHHFCTRSRLDWNTAVS) are cytoplasmic. A helical transmembrane segment spans residues 131–151 (LVFFVWLSSAFWAALPLLGWG). At 152-175 (HYDYEPLGTCCTLDYSRGDRNFTS) the chain is on the extracellular side. Residue Asn172 is glycosylated (N-linked (GlcNAc...) asparagine). The chain crosses the membrane as a helical span at residues 176-196 (FLFTMAFFNFLLPLFITVVSY). Residues 197-219 (RLMEQKLGKTSRPPVNTVLPART) are Cytoplasmic-facing. Residues 220 to 240 (LLLGWGPYALLYLYATIADAT) form a helical membrane-spanning segment. The Extracellular segment spans residues 241–247 (SISPKLQ). Residues 248-268 (MVPALIAKAVPTVNAMNYALG) traverse the membrane as a helical segment. Lys255 bears the N6-(retinylidene)lysine mark. At 269 to 291 (SEMVHRGIWQCLSPQRREHSREQ) the chain is on the cytoplasmic side.

The protein belongs to the G-protein coupled receptor 1 family. Opsin subfamily. In terms of processing, covalently binds all-trans- and 11-cis-retinal. As to expression, preferentially expressed at high levels in the retinal pigment epithelium (RPE) and Mueller cells of the neural retina.

The protein localises to the membrane. Functionally, receptor for all-trans- and 11-cis-retinal. Binds preferentially to the former and may catalyze the isomerization of the chromophore by a retinochrome-like mechanism. This chain is RPE-retinal G protein-coupled receptor (RGR), found in Bos taurus (Bovine).